The sequence spans 167 residues: NADH-quinone oxidoreductase subunit E (167 aa).

Positions 91, 96, 132, and 136 each coordinate [2Fe-2S] cluster.

It belongs to the complex I 24 kDa subunit family. [2Fe-2S] cluster is required as a cofactor.

It carries out the reaction a quinone + NADH + 5 H(+)(in) = a quinol + NAD(+) + 4 H(+)(out). In terms of biological role, NDH-1 shuttles electrons from NADH, via FMN and iron-sulfur (Fe-S) centers, to quinones in the respiratory chain. Couples the redox reaction to proton translocation (for every two electrons transferred, four hydrogen ions are translocated across the cytoplasmic membrane), and thus conserves the redox energy in a proton gradient. This chain is NADH-quinone oxidoreductase subunit E (nuoE), found in Rickettsia bellii (strain RML369-C).